The chain runs to 259 residues: Small ribosomal subunit protein uS2 (259 aa).

This sequence belongs to the universal ribosomal protein uS2 family.

The sequence is that of Small ribosomal subunit protein uS2 from Streptococcus pneumoniae serotype 4 (strain ATCC BAA-334 / TIGR4).